A 277-amino-acid polypeptide reads, in one-letter code: Putative hydro-lyase SCO1412 (277 aa).

It belongs to the D-glutamate cyclase family.

In Streptomyces coelicolor (strain ATCC BAA-471 / A3(2) / M145), this protein is Putative hydro-lyase SCO1412.